The sequence spans 201 residues: Dephospho-CoA kinase (201 aa).

In terms of domain architecture, DPCK spans 3–201 (IIGLTGGMAA…ALLHRLREAS (199 aa)). Residue 11 to 16 (AAGKST) participates in ATP binding.

Belongs to the CoaE family.

It is found in the cytoplasm. The catalysed reaction is 3'-dephospho-CoA + ATP = ADP + CoA + H(+). It participates in cofactor biosynthesis; coenzyme A biosynthesis; CoA from (R)-pantothenate: step 5/5. Its function is as follows. Catalyzes the phosphorylation of the 3'-hydroxyl group of dephosphocoenzyme A to form coenzyme A. The protein is Dephospho-CoA kinase of Gluconobacter oxydans (strain 621H) (Gluconobacter suboxydans).